The sequence spans 443 residues: Exodeoxyribonuclease 7 large subunit (443 aa).

Belongs to the XseA family. As to quaternary structure, heterooligomer composed of large and small subunits.

Its subcellular location is the cytoplasm. It catalyses the reaction Exonucleolytic cleavage in either 5'- to 3'- or 3'- to 5'-direction to yield nucleoside 5'-phosphates.. In terms of biological role, bidirectionally degrades single-stranded DNA into large acid-insoluble oligonucleotides, which are then degraded further into small acid-soluble oligonucleotides. The polypeptide is Exodeoxyribonuclease 7 large subunit (Vibrio vulnificus (strain YJ016)).